The primary structure comprises 205 residues: Holliday junction branch migration complex subunit RuvA (205 aa).

Residues 1 to 64 (MIGRLRGTLA…EDAHLLYGFA (64 aa)) are domain I. The tract at residues 65 to 143 (EKRERELFRE…AWETSPAMFT (79 aa)) is domain II. Positions 144-154 (LVSDGPLPVAS) are flexible linker. Residues 154–205 (SESSAEADAVSALVSLGYKPQEASKAIAAIKDKAGLSSEELIRRSLKGMISK) form a domain III region.

It belongs to the RuvA family. As to quaternary structure, homotetramer. Forms an RuvA(8)-RuvB(12)-Holliday junction (HJ) complex. HJ DNA is sandwiched between 2 RuvA tetramers; dsDNA enters through RuvA and exits via RuvB. An RuvB hexamer assembles on each DNA strand where it exits the tetramer. Each RuvB hexamer is contacted by two RuvA subunits (via domain III) on 2 adjacent RuvB subunits; this complex drives branch migration. In the full resolvosome a probable DNA-RuvA(4)-RuvB(12)-RuvC(2) complex forms which resolves the HJ.

It localises to the cytoplasm. The RuvA-RuvB-RuvC complex processes Holliday junction (HJ) DNA during genetic recombination and DNA repair, while the RuvA-RuvB complex plays an important role in the rescue of blocked DNA replication forks via replication fork reversal (RFR). RuvA specifically binds to HJ cruciform DNA, conferring on it an open structure. The RuvB hexamer acts as an ATP-dependent pump, pulling dsDNA into and through the RuvAB complex. HJ branch migration allows RuvC to scan DNA until it finds its consensus sequence, where it cleaves and resolves the cruciform DNA. This chain is Holliday junction branch migration complex subunit RuvA, found in Pseudomonas putida (strain ATCC 47054 / DSM 6125 / CFBP 8728 / NCIMB 11950 / KT2440).